The sequence spans 387 residues: LL-diaminopimelate aminotransferase (387 aa).

Substrate contacts are provided by Y14 and G39. Pyridoxal 5'-phosphate-binding positions include Y68, 102 to 103 (SK), Y127, N177, Y208, and 236 to 238 (SLS). Substrate is bound by residues K103, Y127, and N177. K239 carries the post-translational modification N6-(pyridoxal phosphate)lysine. R247 provides a ligand contact to pyridoxal 5'-phosphate. R365 lines the substrate pocket.

Belongs to the class-I pyridoxal-phosphate-dependent aminotransferase family. LL-diaminopimelate aminotransferase subfamily. As to quaternary structure, homodimer. The cofactor is pyridoxal 5'-phosphate.

The catalysed reaction is (2S,6S)-2,6-diaminopimelate + 2-oxoglutarate = (S)-2,3,4,5-tetrahydrodipicolinate + L-glutamate + H2O + H(+). It participates in amino-acid biosynthesis; L-lysine biosynthesis via DAP pathway; LL-2,6-diaminopimelate from (S)-tetrahydrodipicolinate (aminotransferase route): step 1/1. In terms of biological role, involved in the synthesis of meso-diaminopimelate (m-DAP or DL-DAP), required for both lysine and peptidoglycan biosynthesis. Catalyzes the direct conversion of tetrahydrodipicolinate to LL-diaminopimelate. This chain is LL-diaminopimelate aminotransferase, found in Aquifex aeolicus (strain VF5).